The primary structure comprises 436 residues: tRNA(Ile)-lysidine synthase (436 aa).

27 to 32 provides a ligand contact to ATP; that stretch reads SGGVDS.

This sequence belongs to the tRNA(Ile)-lysidine synthase family.

It is found in the cytoplasm. It catalyses the reaction cytidine(34) in tRNA(Ile2) + L-lysine + ATP = lysidine(34) in tRNA(Ile2) + AMP + diphosphate + H(+). In terms of biological role, ligates lysine onto the cytidine present at position 34 of the AUA codon-specific tRNA(Ile) that contains the anticodon CAU, in an ATP-dependent manner. Cytidine is converted to lysidine, thus changing the amino acid specificity of the tRNA from methionine to isoleucine. This Vibrio vulnificus (strain CMCP6) protein is tRNA(Ile)-lysidine synthase.